The chain runs to 506 residues: Maturase K (506 aa).

It belongs to the intron maturase 2 family. MatK subfamily.

The protein resides in the plastid. Its subcellular location is the chloroplast. In terms of biological role, usually encoded in the trnK tRNA gene intron. Probably assists in splicing its own and other chloroplast group II introns. This Trifolium spumosum (Mediterranean clover) protein is Maturase K.